The primary structure comprises 158 residues: Protein E6 (158 aa).

Zinc fingers lie at residues 32–68 (CVYC…CQSC) and 105–141 (CMSC…CRHC). The short motif at 156 to 158 (TQV) is the PDZ-binding domain element.

It belongs to the papillomaviridae E6 protein family. As to quaternary structure, forms homodimers. Interacts with ubiquitin-protein ligase UBE3A/E6-AP and thus forms a complex with human TP53. Interacts with human NFX1 and MAGI3. Interacts with human IRF3; this interaction inhibits the establishment of antiviral state. Interacts with human TYK2; this interaction inhibits JAK-STAT activation by interferon alpha. Interacts with host DLG1; this interaction leads to the proteasomal degradation of DLG1.

It localises to the host cytoplasm. The protein resides in the host nucleus. In terms of biological role, plays a major role in the induction and maintenance of cellular transformation. Acts mainly as an oncoprotein by stimulating the destruction of many host cell key regulatory proteins. E6 associates with host UBE3A/E6-AP ubiquitin-protein ligase, and inactivates tumor suppressors TP53 and TP73 by targeting them to the 26S proteasome for degradation. In turn, DNA damage and chromosomal instabilities increase and lead to cell proliferation and cancer development. The complex E6/E6AP targets several other substrates to degradation via the proteasome including host DLG1 or NFX1, a repressor of human telomerase reverse transcriptase (hTERT). The resulting increased expression of hTERT prevents the shortening of telomere length leading to cell immortalization. Other cellular targets including BAK1, Fas-associated death domain-containing protein (FADD) and procaspase 8, are degraded by E6/E6AP causing inhibition of apoptosis. E6 also inhibits immune response by interacting with host IRF3 and TYK2. These interactions prevent IRF3 transcriptional activities and inhibit TYK2-mediated JAK-STAT activation by interferon alpha resulting in inhibition of the interferon signaling pathway. The chain is Protein E6 from Homo sapiens (Human).